Reading from the N-terminus, the 245-residue chain is Probable histone chaperone asf-1-like protein (245 aa).

The segment covering 157–166 (EDPVAEPVDE) has biased composition (acidic residues). Positions 157–245 (EDPVAEPVDE…SGDVEMGDKH (89 aa)) are disordered. Over residues 167–183 (EANKVFDEDDLMPLHDD) the composition is skewed to basic and acidic residues. A compositionally biased stretch (acidic residues) spans 184-206 (GQDDDEEEEDDDETGPNTEEVDL). Basic and acidic residues predominate over residues 215-245 (ANAHDGTEQKNGEESMEHDGASGDVEMGDKH).

Belongs to the ASF1 family. In terms of assembly, interacts with histone H3 and histone H4.

It is found in the nucleus. Its function is as follows. Histone chaperone that facilitates histone deposition and histone exchange and removal during nucleosome assembly and disassembly. This Caenorhabditis elegans protein is Probable histone chaperone asf-1-like protein (asfl-1).